Consider the following 149-residue polypeptide: Calmodulin (149 aa).

At alanine 2 the chain carries N-acetylalanine. EF-hand domains are found at residues 8-43 (EQIAEFKEAGSLFDKDGDGTITTKELGTVMRSVGQN), 44-79 (PTEAELQDMINEVDADGNGTIDFPEFLTMMARKMKD), 81-116 (DSEEEILEAFQGFDKDGNGFISAAELRHMMTNLGEK), and 117-149 (LTDEEVDEMIREADIDGDGQINYEEFVKMMMSK). Aspartate 21, aspartate 23, aspartate 25, threonine 27, glutamate 32, aspartate 57, aspartate 59, asparagine 61, threonine 63, glutamate 68, aspartate 94, aspartate 96, asparagine 98, glutamate 105, aspartate 130, aspartate 132, aspartate 134, glutamine 136, and glutamate 141 together coordinate Ca(2+).

The protein belongs to the calmodulin family.

Its function is as follows. Calmodulin mediates the control of a large number of enzymes, ion channels and other proteins by Ca(2+). Among the enzymes to be stimulated by the calmodulin-Ca(2+) complex are a number of protein kinases and phosphatases. In Achlya klebsiana, this protein is Calmodulin (CMD1).